Reading from the N-terminus, the 123-residue chain is Large-conductance mechanosensitive channel (123 aa).

Transmembrane regions (helical) follow at residues 14–34 (VIDM…VKSL) and 67–87 (GSFL…FLMV).

The protein belongs to the MscL family. Homopentamer.

It localises to the cell membrane. Functionally, channel that opens in response to stretch forces in the membrane lipid bilayer. May participate in the regulation of osmotic pressure changes within the cell. This is Large-conductance mechanosensitive channel from Limosilactobacillus reuteri (strain DSM 20016) (Lactobacillus reuteri).